The sequence spans 393 residues: Prokineticin receptor 1 (393 aa).

At 1 to 63 the chain is on the extracellular side; the sequence is MEITMGVMDE…NSRTFFAAKI (63 aa). 3 N-linked (GlcNAc...) asparagine glycosylation sites follow: Asn11, Asn14, and Asn36. Residues 64–84 form a helical membrane-spanning segment; that stretch reads VIGMALVGIMLVCGIGNFIFI. At 85–98 the chain is on the cytoplasmic side; that stretch reads AALARYKKLRNLTN. Residues 99–119 form a helical membrane-spanning segment; sequence LLIANLAISDFLVAIVCCPFE. The Extracellular segment spans residues 120–145; sequence MDYYVVRQLSWEHGHVLCASVNYLRT. A disulfide bond links Cys137 and Cys217. A helical membrane pass occupies residues 146 to 166; the sequence is VSLYVSTNALLAIAIDRYLAI. Topologically, residues 167–179 are cytoplasmic; it reads VHPLRPRMKYQTA. The helical transmembrane segment at 180 to 200 threads the bilayer; sequence TGLIALVWVVSILVAIPSAYF. At 201–232 the chain is on the extracellular side; it reads TTETVLVIVKSQEKIFCGQIWPVDQQIYYKSY. A helical transmembrane segment spans residues 233–253; it reads FLFIFGIEFVGPVVTMTLCYA. Residues 254-282 lie on the Cytoplasmic side of the membrane; sequence RISRELWFKAVPGFQTEQIRKRLRCRRKT. Residues 283-303 form a helical membrane-spanning segment; that stretch reads VLVLMCILTAYVLCWAPFYGF. Residues 304–322 are Extracellular-facing; sequence AIVRDFFPTVFVKEKHYLT. Residues 323–343 traverse the membrane as a helical segment; the sequence is AFYVVECIAMSNSMINTVCFV. Topologically, residues 344–393 are cytoplasmic; the sequence is TVKNNTIKYFKKIMLLHWKASYNGSKSSGDLDLKTTGVPATEEVDCIGLK.

It belongs to the G-protein coupled receptor 1 family.

The protein localises to the cell membrane. Its function is as follows. Receptor for prokineticin 1. Exclusively coupled to the G(q) subclass of heteromeric G proteins. Activation leads to mobilization of calcium, stimulation of phosphoinositide turnover and activation of p44/p42 mitogen-activated protein kinase. May play a role during early pregnancy. This Bos taurus (Bovine) protein is Prokineticin receptor 1 (PROKR1).